The chain runs to 240 residues: Small ribosomal subunit protein uS2 (240 aa).

It belongs to the universal ribosomal protein uS2 family.

This is Small ribosomal subunit protein uS2 (rpsB) from Pasteurella multocida (strain Pm70).